A 253-amino-acid polypeptide reads, in one-letter code: Ribosome maturation protein SBDS (253 aa).

The protein belongs to the SDO1/SBDS family. As to quaternary structure, associates with the 60S ribosomal subunit.

It localises to the cytoplasm. The protein localises to the nucleus. The protein resides in the nucleolus. Its subcellular location is the nucleoplasm. It is found in the cytoskeleton. It localises to the spindle. In terms of biological role, required for the assembly of mature ribosomes and ribosome biogenesis. Together with K10C3.5b/EFL1, triggers the GTP-dependent release of ribosome maturation factors from 60S pre-ribosomes in the cytoplasm, thereby activating ribosomes for translation competence by allowing 80S ribosome assembly. Required for normal levels of protein synthesis. May play a role in cellular stress resistance. May play a role in cellular response to DNA damage. May play a role in cell proliferation. The polypeptide is Ribosome maturation protein SBDS (sbds-1) (Caenorhabditis elegans).